We begin with the raw amino-acid sequence, 204 residues long: CASP-like protein 1U3 (204 aa).

Topologically, residues 1 to 19 (MCEGEKKKDSSSGALYCVN) are cytoplasmic. The helical transmembrane segment at 20-40 (LALRIVVLGLAVAAAALMATA) threads the bilayer. Over 41–63 (SQCTIFLYYGGPLHTITYKDFGP) the chain is Extracellular. The helical transmembrane segment at 64-84 (FVYLVVASSIGAFMEAIAIFL) threads the bilayer. Residues 85–97 (TICKKKDGTPAKV) are Cytoplasmic-facing. Residues 98–118 (LLPLLDAAVPVLLYSATAAAF) traverse the membrane as a helical segment. Residues 119 to 146 (AAGDMSYCAVGKRVGVCTTAAAGNFCNQ) lie on the Extracellular side of the membrane. A helical membrane pass occupies residues 147-167 (VHIAMYVSLAAGVALLVAEIV). Over 168–204 (KHWPDSGKKKEGGGGGCGSDSDSDKSTPCHHGCHSKH) the chain is Cytoplasmic. The disordered stretch occupies residues 173–204 (SGKKKEGGGGGCGSDSDSDKSTPCHHGCHSKH).

The protein belongs to the Casparian strip membrane proteins (CASP) family. Homodimer and heterodimers.

It localises to the cell membrane. The chain is CASP-like protein 1U3 from Oryza sativa subsp. japonica (Rice).